A 501-amino-acid polypeptide reads, in one-letter code: ADP,ATP carrier protein 3 (501 aa).

The next 12 membrane-spanning stretches (helical) occupy residues 23 to 43 (LKLF…FGAL), 59 to 79 (IISF…TVLY), 90 to 110 (YIFY…AYII), 146 to 166 (YALM…LMFW), 183 to 203 (PVLG…LVFF), 227 to 247 (IMLQ…MLLF), 293 to 313 (IALL…PWKA), 326 to 346 (VNFM…FMII), 361 to 381 (LLTP…IIFI), 387 to 407 (CFGD…QNIL), 446 to 466 (FGKS…PTAT), and 470 to 490 (IIIY…WNVI).

The protein belongs to the ADP/ATP translocase tlc family.

It is found in the cell membrane. Functionally, provides the rickettsial cell with host ATP in exchange for rickettsial ADP. This is an obligate exchange system. This energy acquiring activity is an important component of rickettsial parasitism. The sequence is that of ADP,ATP carrier protein 3 (tlcC) from Rickettsia conorii (strain ATCC VR-613 / Malish 7).